A 357-amino-acid chain; its full sequence is Peptide chain release factor 1 (357 aa).

The residue at position 236 (glutamine 236) is an N5-methylglutamine.

Belongs to the prokaryotic/mitochondrial release factor family. In terms of processing, methylated by PrmC. Methylation increases the termination efficiency of RF1.

Its subcellular location is the cytoplasm. Peptide chain release factor 1 directs the termination of translation in response to the peptide chain termination codons UAG and UAA. The chain is Peptide chain release factor 1 (prfA) from Mycobacterium bovis (strain ATCC BAA-935 / AF2122/97).